Reading from the N-terminus, the 308-residue chain is Ornithine carbamoyltransferase (308 aa).

Residues 52–55, glutamine 79, arginine 103, and 130–133 each bind carbamoyl phosphate; these read STRT and HPLQ. L-ornithine is bound by residues asparagine 162, aspartate 224, and 228–229; that span reads SM. Carbamoyl phosphate-binding positions include 264-265 and arginine 292; that span reads CL.

Belongs to the aspartate/ornithine carbamoyltransferase superfamily. OTCase family.

The protein localises to the cytoplasm. The catalysed reaction is carbamoyl phosphate + L-ornithine = L-citrulline + phosphate + H(+). It functions in the pathway amino-acid biosynthesis; L-arginine biosynthesis; L-arginine from L-ornithine and carbamoyl phosphate: step 1/3. Its function is as follows. Reversibly catalyzes the transfer of the carbamoyl group from carbamoyl phosphate (CP) to the N(epsilon) atom of ornithine (ORN) to produce L-citrulline. This is Ornithine carbamoyltransferase from Pyrobaculum calidifontis (strain DSM 21063 / JCM 11548 / VA1).